A 434-amino-acid chain; its full sequence is Adenylosuccinate synthetase (434 aa).

Residues 22–28 (GDEGKGK) and 50–52 (GHT) contribute to the GTP site. Catalysis depends on Asp23, which acts as the Proton acceptor. 2 residues coordinate Mg(2+): Asp23 and Gly50. Residues 23–26 (DEGK), 48–51 (NAGH), Thr139, Arg153, Gln234, Thr249, and Arg313 contribute to the IMP site. His51 serves as the catalytic Proton donor. A substrate-binding site is contributed by 309 to 315 (ATTGRKR). GTP is bound by residues Arg315, 341 to 343 (KLD), and 423 to 425 (SVG).

This sequence belongs to the adenylosuccinate synthetase family. As to quaternary structure, homodimer. Mg(2+) serves as cofactor.

Its subcellular location is the cytoplasm. The catalysed reaction is IMP + L-aspartate + GTP = N(6)-(1,2-dicarboxyethyl)-AMP + GDP + phosphate + 2 H(+). It participates in purine metabolism; AMP biosynthesis via de novo pathway; AMP from IMP: step 1/2. Its function is as follows. Plays an important role in the de novo pathway of purine nucleotide biosynthesis. Catalyzes the first committed step in the biosynthesis of AMP from IMP. The chain is Adenylosuccinate synthetase from Chlorobium limicola (strain DSM 245 / NBRC 103803 / 6330).